The chain runs to 156 residues: Small ribosomal subunit protein uS7 (156 aa).

Belongs to the universal ribosomal protein uS7 family. Part of the 30S ribosomal subunit. Contacts proteins S9 and S11.

In terms of biological role, one of the primary rRNA binding proteins, it binds directly to 16S rRNA where it nucleates assembly of the head domain of the 30S subunit. Is located at the subunit interface close to the decoding center, probably blocks exit of the E-site tRNA. This chain is Small ribosomal subunit protein uS7, found in Rhodobacter capsulatus (Rhodopseudomonas capsulata).